Reading from the N-terminus, the 700-residue chain is Non-hemolytic phospholipase C (700 aa).

The tat-type signal signal peptide spans Met1 to Ala34.

The protein belongs to the bacterial phospholipase C family. Predicted to be exported by the Tat system. The position of the signal peptide cleavage has not been experimentally proven.

It catalyses the reaction a 1,2-diacyl-sn-glycero-3-phosphocholine + H2O = phosphocholine + a 1,2-diacyl-sn-glycerol + H(+). Functionally, hydrolyzes phosphatidylserine as well as phosphatidylcholine. The protein is Non-hemolytic phospholipase C (plcN) of Burkholderia pseudomallei (strain K96243).